The sequence spans 336 residues: DNA-directed RNA polymerase subunit alpha (336 aa).

The interval 1–232 (MIQKNWQELI…DQLSVFVNFD (232 aa)) is alpha N-terminal domain (alpha-NTD). The alpha C-terminal domain (alpha-CTD) stretch occupies residues 248–336 (FNPALLKKVD…DLAKRYEDQY (89 aa)).

Belongs to the RNA polymerase alpha chain family. In terms of assembly, homodimer. The RNAP catalytic core consists of 2 alpha, 1 beta, 1 beta' and 1 omega subunit. When a sigma factor is associated with the core the holoenzyme is formed, which can initiate transcription.

It carries out the reaction RNA(n) + a ribonucleoside 5'-triphosphate = RNA(n+1) + diphosphate. Its function is as follows. DNA-dependent RNA polymerase catalyzes the transcription of DNA into RNA using the four ribonucleoside triphosphates as substrates. The chain is DNA-directed RNA polymerase subunit alpha from Sinorhizobium fredii (strain NBRC 101917 / NGR234).